An 846-amino-acid chain; its full sequence is DNA mismatch repair protein MutS (846 aa).

Residue 594 to 601 (GPNMSGKS) coordinates ATP.

The protein belongs to the DNA mismatch repair MutS family.

This protein is involved in the repair of mismatches in DNA. It is possible that it carries out the mismatch recognition step. This protein has a weak ATPase activity. The sequence is that of DNA mismatch repair protein MutS from Macrococcus caseolyticus (strain JCSC5402) (Macrococcoides caseolyticum).